Reading from the N-terminus, the 154-residue chain is Myoglobin (154 aa).

The region spanning 2 to 148 is the Globin domain; it reads ELSDQEWKHV…FRNDMASKYK (147 aa). Residue H65 coordinates nitrite. H65 contacts O2. H94 lines the heme b pocket.

The protein belongs to the globin family. Monomeric.

The protein localises to the cytoplasm. The protein resides in the sarcoplasm. The enzyme catalyses Fe(III)-heme b-[protein] + nitric oxide + H2O = Fe(II)-heme b-[protein] + nitrite + 2 H(+). The catalysed reaction is H2O2 + AH2 = A + 2 H2O. Functionally, monomeric heme protein which primary function is to store oxygen and facilitate its diffusion within muscle tissues. Reversibly binds oxygen through a pentacoordinated heme iron and enables its timely and efficient release as needed during periods of heightened demand. Depending on the oxidative conditions of tissues and cells, and in addition to its ability to bind oxygen, it also has a nitrite reductase activity whereby it regulates the production of bioactive nitric oxide. Under stress conditions, like hypoxia and anoxia, it also protects cells against reactive oxygen species thanks to its pseudoperoxidase activity. The polypeptide is Myoglobin (MB) (Alligator mississippiensis (American alligator)).